Reading from the N-terminus, the 531-residue chain is Flavin-containing monooxygenase 3 (531 aa).

FAD is bound by residues 9–13 (GAGIS), E32, 40–41 (LW), and 61–62 (NS). NADP(+) is bound by residues 60–61 (TN) and 195–198 (SGCD). A helical membrane pass occupies residues 511–531 (FSPWLKLLAIAVLLIAAVLVF).

Belongs to the FMO family. The cofactor is FAD. In terms of tissue distribution, liver.

The protein resides in the microsome membrane. Its subcellular location is the endoplasmic reticulum membrane. The enzyme catalyses trimethylamine + NADPH + O2 = trimethylamine N-oxide + NADP(+) + H2O. It catalyses the reaction N,N-dimethylaniline + NADPH + O2 + H(+) = N,N-dimethylaniline N-oxide + NADP(+) + H2O. It carries out the reaction hypotaurine + NADPH + O2 + H(+) = taurine + NADP(+) + H2O. The catalysed reaction is (S)-nicotine + NADPH + O2 = trans-(S)-nicotine N(1')-oxide + NADP(+) + H2O. The enzyme catalyses albendazole + NADPH + O2 + H(+) = albendazole S-oxide + NADP(+) + H2O. Essential hepatic enzyme that catalyzes the oxygenation of a wide variety of nitrogen- and sulfur-containing compounds including drugs as well as dietary compounds. Plays an important role in the metabolism of trimethylamine (TMA), via the production of trimethylamine N-oxide (TMAO) metabolite. TMA is generated by the action of gut microbiota using dietary precursors such as choline, choline containing compounds, betaine or L-carnitine. By regulating TMAO concentration, FMO3 directly impacts both platelet responsiveness and rate of thrombus formation. The chain is Flavin-containing monooxygenase 3 (FMO3) from Oryctolagus cuniculus (Rabbit).